We begin with the raw amino-acid sequence, 184 residues long: Glutathione-regulated potassium-efflux system ancillary protein KefG (184 aa).

This sequence belongs to the NAD(P)H dehydrogenase (quinone) family. KefG subfamily. Interacts with KefB.

It localises to the cell inner membrane. The enzyme catalyses a quinone + NADH + H(+) = a quinol + NAD(+). It carries out the reaction a quinone + NADPH + H(+) = a quinol + NADP(+). Functionally, regulatory subunit of a potassium efflux system that confers protection against electrophiles. Required for full activity of KefB. This is Glutathione-regulated potassium-efflux system ancillary protein KefG from Escherichia coli O1:K1 / APEC.